The following is a 225-amino-acid chain: Enolase-phosphatase E1 (225 aa).

This sequence belongs to the HAD-like hydrolase superfamily. MasA/MtnC family. As to quaternary structure, monomer. Mg(2+) is required as a cofactor.

The catalysed reaction is 5-methylsulfanyl-2,3-dioxopentyl phosphate + H2O = 1,2-dihydroxy-5-(methylsulfanyl)pent-1-en-3-one + phosphate. The protein operates within amino-acid biosynthesis; L-methionine biosynthesis via salvage pathway; L-methionine from S-methyl-5-thio-alpha-D-ribose 1-phosphate: step 3/6. Its pathway is amino-acid biosynthesis; L-methionine biosynthesis via salvage pathway; L-methionine from S-methyl-5-thio-alpha-D-ribose 1-phosphate: step 4/6. Bifunctional enzyme that catalyzes the enolization of 2,3-diketo-5-methylthiopentyl-1-phosphate (DK-MTP-1-P) into the intermediate 2-hydroxy-3-keto-5-methylthiopentenyl-1-phosphate (HK-MTPenyl-1-P), which is then dephosphorylated to form the acireductone 1,2-dihydroxy-3-keto-5-methylthiopentene (DHK-MTPene). This Pseudomonas aeruginosa (strain LESB58) protein is Enolase-phosphatase E1.